The chain runs to 366 residues: Transcription factor IIIA (366 aa).

9 consecutive C2H2-type zinc fingers follow at residues 35 to 59 (YICS…LCKH), 65 to 89 (FPCK…SLTH), 95 to 120 (FTCD…NRFH), 127 to 151 (YVCH…QFSH), 157 to 181 (YECP…EKVH), 184 to 210 (YPCK…AECH), 214 to 236 (AVCD…QKTH), 243 to 268 (YLCP…QSFH), and 274 to 298 (FVCE…SVVH). Serine 38 is modified (phosphoserine; by CK2). The span at 299–310 (DPEKRKLKEKCP) shows a compositional bias: basic and acidic residues. The interval 299 to 366 (DPEKRKLKEK…SLVLDKLTIQ (68 aa)) is disordered. Serine 336 is modified (phosphoserine; by CK2; in vitro).

In terms of processing, the N-terminus is blocked. In terms of tissue distribution, synthesized in oocytes and, in much lower levels, in somatic cells.

The protein localises to the nucleus. In terms of biological role, involved in ribosomal large subunit biogenesis. Acts both as a positive transcription factor for 5S RNA genes, and as a specific RNA binding protein that complexes with 5S RNA in oocytes to form the 7S ribonucleoprotein storage particle. May play an essential role in the developmental change in 5S RNA gene expression. Interacts with the internal control region (ICR) of approximately 50 bases within the 5S RNA genes, is required for correct transcription of these genes by RNA polymerase III. Also binds the transcribed 5S RNA's. In Xenopus laevis (African clawed frog), this protein is Transcription factor IIIA (gtf3a).